The following is a 787-amino-acid chain: Transcriptional corepressor LEUNIG_HOMOLOG (787 aa).

The tract at residues 1-88 is required for SEU-binding; the sequence is MAQSNWEADK…IEAQQGKAKE (88 aa). Residues 8 to 40 enclose the LisH domain; that stretch reads ADKMLDVYIYDYLVKKKLHNTAKSFMTEGKVSP. A coiled-coil region spans residues 77–106; that stretch reads AYIEAQQGKAKEQQMQIQQLQMMRQAQMQR. The disordered stretch occupies residues 299–413; sequence NMTNSPMYGG…TPSTHTPVDG (115 aa). Composition is skewed to low complexity over residues 336 to 346 and 355 to 372; these read SIGSPMQSSSS and QQSS…QSQQ. Polar residues predominate over residues 380–409; sequence PSSSGPANSTGTGNTVGPSNSQPSTPSTHT. WD repeat units lie at residues 508–547, 550–589, 593–633, 635–671, 675–715, 717–755, and 757–787; these read KSAS…VEST, EHAH…YFLR, GHAA…VRAV, GAST…KRVN, GHSS…HELS, SGNK…CMTV, and GHEC…KIWK.

As to quaternary structure, forms corepressor complexes with SLK1 and SLK2; LUH is the transcription repressor subunit and SLK1 and SLK2 the specific DNA-binding adapters. Interacts with SEU. Binds to YAB3, YAB5 and YAB1/FIL; these complexes promote adaxial cell identity in leaves as well as embryonic shoot apical meristem (SAM) initiation and postembryonic SAM maintenance. As to expression, expressed in roots, stems, leaves, seedlings, apex, flowers, siliques, flower organs and seeds (including seed coat).

Its subcellular location is the nucleus. Transcription repressor subunit of the SEU-SLK1 and SEU-SLK2 transcriptional corepressor of abiotic stress (e.g. salt and osmotic stress) response genes, by means of an epigenetic process involving histone modification (e.g. H3K9 and H3K14 acetylation), probably by recruiting HDAC, to facilitate the condensation of chromatin thus preventing transcription at the target genes. Can also act as a transcription activator. Implicated in embryo and floral development. Involved in post-synthesis cell wall modifications necessary for mucilage extrusion from seeds upon imbibition, probably by promoting the expression of genes required for mucilage maturation (e.g. MUM2). Regulates the maintenance on leaf polarity and meristem activity as well as the initiation of embryonic shoot apical meristem (SAM) development. In Arabidopsis thaliana (Mouse-ear cress), this protein is Transcriptional corepressor LEUNIG_HOMOLOG.